An 81-amino-acid chain; its full sequence is Short neurotoxin 2 (81 aa).

Positions 1–21 are cleaved as a signal peptide; that stretch reads MKTLLLTLVVVTIVCLDLGYT. Disulfide bonds link Cys24–Cys43, Cys38–Cys60, Cys62–Cys73, and Cys74–Cys79.

The protein belongs to the three-finger toxin family. Short-chain subfamily. Type I alpha-neurotoxin sub-subfamily. As to expression, expressed by the venom gland.

Its subcellular location is the secreted. Its function is as follows. Binds to muscle nicotinic acetylcholine receptor (nAChR) and inhibit acetylcholine from binding to the receptor, thereby impairing neuromuscular transmission. In Drysdalia coronoides (White-lipped snake), this protein is Short neurotoxin 2.